Consider the following 189-residue polypeptide: dCTP deaminase (189 aa).

DCTP-binding positions include 112-117 (KSTYAR), 136-138 (TLE), glutamine 157, tyrosine 171, and glutamine 181. Glutamate 138 serves as the catalytic Proton donor/acceptor.

It belongs to the dCTP deaminase family. As to quaternary structure, homotrimer.

The enzyme catalyses dCTP + H2O + H(+) = dUTP + NH4(+). It participates in pyrimidine metabolism; dUMP biosynthesis; dUMP from dCTP (dUTP route): step 1/2. In terms of biological role, catalyzes the deamination of dCTP to dUTP. This chain is dCTP deaminase, found in Alcanivorax borkumensis (strain ATCC 700651 / DSM 11573 / NCIMB 13689 / SK2).